A 475-amino-acid chain; its full sequence is Ribulose bisphosphate carboxylase large chain (475 aa).

Residues 1–2 (MS) constitute a propeptide that is removed on maturation. Pro3 bears the N-acetylproline mark. Position 14 is an N6,N6,N6-trimethyllysine (Lys14). Substrate contacts are provided by Asn123 and Thr173. Lys175 (proton acceptor) is an active-site residue. Lys177 contacts substrate. Residues Lys201, Asp203, and Glu204 each coordinate Mg(2+). Lys201 bears the N6-carboxylysine mark. Residue His294 is the Proton acceptor of the active site. 3 residues coordinate substrate: Arg295, His327, and Ser379.

Belongs to the RuBisCO large chain family. Type I subfamily. Heterohexadecamer of 8 large chains and 8 small chains; disulfide-linked. The disulfide link is formed within the large subunit homodimers. Mg(2+) serves as cofactor. In terms of processing, the disulfide bond which can form in the large chain dimeric partners within the hexadecamer appears to be associated with oxidative stress and protein turnover.

It localises to the plastid. It is found in the chloroplast. The enzyme catalyses 2 (2R)-3-phosphoglycerate + 2 H(+) = D-ribulose 1,5-bisphosphate + CO2 + H2O. The catalysed reaction is D-ribulose 1,5-bisphosphate + O2 = 2-phosphoglycolate + (2R)-3-phosphoglycerate + 2 H(+). Its function is as follows. RuBisCO catalyzes two reactions: the carboxylation of D-ribulose 1,5-bisphosphate, the primary event in carbon dioxide fixation, as well as the oxidative fragmentation of the pentose substrate in the photorespiration process. Both reactions occur simultaneously and in competition at the same active site. The protein is Ribulose bisphosphate carboxylase large chain of Angiopteris evecta (Mule's foot fern).